A 353-amino-acid polypeptide reads, in one-letter code: UPF0283 membrane protein YcjF (353 aa).

The segment covering Met-1 to Pro-19 has biased composition (basic and acidic residues). A disordered region spans residues Met-1–Asp-48. At Met-1 to Lys-69 the chain is on the periplasmic side. A helical transmembrane segment spans residues Met-70–Thr-90. The Cytoplasmic segment spans residues Met-91–Trp-99. The chain crosses the membrane as a helical span at residues Val-100–Val-120. Over Thr-121 to Ala-212 the chain is Periplasmic. Residues Glu-213–Trp-233 form a helical membrane-spanning segment. The Cytoplasmic segment spans residues Arg-234 to Lys-353.

This sequence belongs to the UPF0283 family.

The protein localises to the cell inner membrane. This chain is UPF0283 membrane protein YcjF (ycjF), found in Salmonella typhi.